Reading from the N-terminus, the 92-residue chain is Small ribosomal subunit protein uS19c (92 aa).

This sequence belongs to the universal ribosomal protein uS19 family.

Its subcellular location is the plastid. The protein localises to the chloroplast. In terms of biological role, protein S19 forms a complex with S13 that binds strongly to the 16S ribosomal RNA. This Trieres chinensis (Marine centric diatom) protein is Small ribosomal subunit protein uS19c (rps19).